Reading from the N-terminus, the 300-residue chain is GTPase Era (300 aa).

Residues 8–176 (RCGYVAIVGR…ESLIASHLPE (169 aa)) form the Era-type G domain. The G1 stretch occupies residues 16–23 (GRPNVGKS). Residue 16 to 23 (GRPNVGKS) coordinates GTP. The tract at residues 42–46 (QTTRH) is G2. The interval 63–66 (DTPG) is G3. GTP contacts are provided by residues 63-67 (DTPGM) and 125-128 (NKTD). Residues 125 to 128 (NKTD) are G4. The segment at 155–157 (ISA) is G5. The KH type-2 domain occupies 199–283 (VREKIMRQLG…MLNLWVKVKG (85 aa)).

This sequence belongs to the TRAFAC class TrmE-Era-EngA-EngB-Septin-like GTPase superfamily. Era GTPase family. Monomer.

The protein resides in the cytoplasm. The protein localises to the cell inner membrane. In terms of biological role, an essential GTPase that binds both GDP and GTP, with rapid nucleotide exchange. Plays a role in 16S rRNA processing and 30S ribosomal subunit biogenesis and possibly also in cell cycle regulation and energy metabolism. This chain is GTPase Era, found in Pseudomonas savastanoi pv. phaseolicola (strain 1448A / Race 6) (Pseudomonas syringae pv. phaseolicola (strain 1448A / Race 6)).